Here is a 298-residue protein sequence, read N- to C-terminus: ATP synthase gamma chain (298 aa).

This sequence belongs to the ATPase gamma chain family. In terms of assembly, F-type ATPases have 2 components, CF(1) - the catalytic core - and CF(0) - the membrane proton channel. CF(1) has five subunits: alpha(3), beta(3), gamma(1), delta(1), epsilon(1). CF(0) has three main subunits: a, b and c.

It localises to the cell inner membrane. Functionally, produces ATP from ADP in the presence of a proton gradient across the membrane. The gamma chain is believed to be important in regulating ATPase activity and the flow of protons through the CF(0) complex. The sequence is that of ATP synthase gamma chain from Bacteroides thetaiotaomicron (strain ATCC 29148 / DSM 2079 / JCM 5827 / CCUG 10774 / NCTC 10582 / VPI-5482 / E50).